We begin with the raw amino-acid sequence, 117 residues long: Alpha-endosulfine (117 aa).

Positions 1–53 are disordered; it reads MAAPLGTGARAEDSGQEKQDSQEKETVIPERAEEAKLKAKYPNLGQKPGGSDF. Residues 10–37 are compositionally biased toward basic and acidic residues; sequence RAEDSGQEKQDSQEKETVIPERAEEAKL. Phosphoserine; by GWL is present on Ser-67. The tract at residues 76-117 is disordered; it reads KMKNKQLPTAGPDKNLVTGDHIPKPQDLPQRKSSLVASKLAG.

It belongs to the endosulfine family. Phosphorylation at Ser-67 by GWL during mitosis is essential for interaction with PPP2R2D (PR55-delta) and subsequent inactivation of PP2A.

It localises to the cytoplasm. In terms of biological role, protein phosphatase inhibitor that specifically inhibits protein phosphatase 2A (PP2A) during mitosis. When phosphorylated at Ser-67 during mitosis, specifically interacts with PPP2R2D (PR55-delta) and inhibits its activity, leading to inactivation of PP2A, an essential condition to keep cyclin-B1-CDK1 activity high during M phase. This is Alpha-endosulfine (ENSA) from Gallus gallus (Chicken).